We begin with the raw amino-acid sequence, 353 residues long: Photosystem II protein D1 (353 aa).

N-acetylthreonine is present on Thr-2. Position 2 is a phosphothreonine (Thr-2). 3 consecutive transmembrane segments (helical) span residues 29-46, 118-133, and 142-156; these read YIGW…TATS, HFLL…EWEL, and WIAV…AATA. His-118 lines the chlorophyll a pocket. Tyr-126 lines the pheophytin a pocket. Positions 170 and 189 each coordinate [CaMn4O5] cluster. Residues 197 to 218 form a helical membrane-spanning segment; that stretch reads FHMLGVAGVFGGSLFSAMHGSL. His-198 contacts chlorophyll a. Residues His-215 and 264-265 each bind a quinone; that span reads SF. Residue His-215 participates in Fe cation binding. His-272 is a Fe cation binding site. A helical membrane pass occupies residues 274–288; sequence FLAAWPVIGIWFTAL. Residues His-332, Glu-333, Asp-342, and Ala-344 each coordinate [CaMn4O5] cluster. The propeptide occupies 345-353; the sequence is SVEAPSVNG.

Belongs to the reaction center PufL/M/PsbA/D family. In terms of assembly, PSII is composed of 1 copy each of membrane proteins PsbA, PsbB, PsbC, PsbD, PsbE, PsbF, PsbH, PsbI, PsbJ, PsbK, PsbL, PsbM, PsbT, PsbX, PsbY, PsbZ, Psb30/Ycf12, at least 3 peripheral proteins of the oxygen-evolving complex and a large number of cofactors. It forms dimeric complexes. The D1/D2 heterodimer binds P680, chlorophylls that are the primary electron donor of PSII, and subsequent electron acceptors. It shares a non-heme iron and each subunit binds pheophytin, quinone, additional chlorophylls, carotenoids and lipids. D1 provides most of the ligands for the Mn4-Ca-O5 cluster of the oxygen-evolving complex (OEC). There is also a Cl(-1) ion associated with D1 and D2, which is required for oxygen evolution. The PSII complex binds additional chlorophylls, carotenoids and specific lipids. is required as a cofactor. In terms of processing, tyr-161 forms a radical intermediate that is referred to as redox-active TyrZ, YZ or Y-Z. C-terminally processed by CTPA; processing is essential to allow assembly of the oxygen-evolving complex and thus photosynthetic growth.

It localises to the plastid. The protein resides in the chloroplast thylakoid membrane. It carries out the reaction 2 a plastoquinone + 4 hnu + 2 H2O = 2 a plastoquinol + O2. Its function is as follows. Photosystem II (PSII) is a light-driven water:plastoquinone oxidoreductase that uses light energy to abstract electrons from H(2)O, generating O(2) and a proton gradient subsequently used for ATP formation. It consists of a core antenna complex that captures photons, and an electron transfer chain that converts photonic excitation into a charge separation. The D1/D2 (PsbA/PsbD) reaction center heterodimer binds P680, the primary electron donor of PSII as well as several subsequent electron acceptors. In Chlorokybus atmophyticus (Soil alga), this protein is Photosystem II protein D1.